The following is a 628-amino-acid chain: Protein ETHYLENE INSENSITIVE 3 (628 aa).

Residues 38 to 68 (EDDYTDDEIDVDELERRMWRDKMRLKRLKEQ) adopt a coiled-coil conformation. A compositionally biased stretch (basic and acidic residues) spans 66 to 79 (KEQDKGKEGVDAAK). The disordered stretch occupies residues 66–92 (KEQDKGKEGVDAAKQRQSQEQARRKKM). The interval 174–306 (TPHTLQELQD…SLARELYPES (133 aa)) is DNA-binding domain.

It belongs to the EIN3 family. As to quaternary structure, acts as a homodimer to bind the primary ethylene response element. Interacts with TAF12B. Interacts with KIN10. Binds to ENAP1 in the presence of ethylene; this reaction facilitates its association with histone. In terms of processing, phosphorylated by KIN10.

The protein localises to the nucleus. Activated by phosphorylation by MPK3 and MPK6. Down-regulated by KIN10 that controls its protein stability under a phosphorylation-dependent manner. Satnilitzed during hypoxia (e.g. submergences) via a ceramides-triggered and CTR1-dependent manner. In terms of biological role, transcription factor acting as a positive regulator in the ethylene response pathway, by promoting histone acetylation in an ENAP1-dependent manner, thus accelerating the expression of ethylene-responsive genes. Binds DNA. Is required for ethylene responsiveness in adult plant tissues. Binds a primary ethylene response element present in the ETHYLENE-RESPONSE-FACTOR1 promoter with consequence to activate the transcription of this gene. The chain is Protein ETHYLENE INSENSITIVE 3 from Arabidopsis thaliana (Mouse-ear cress).